Here is a 234-residue protein sequence, read N- to C-terminus: UDP-2,3-diacylglucosamine hydrolase (234 aa).

Asp-9, His-11, Asp-42, Asn-80, and His-115 together coordinate Mn(2+). 80–81 (NR) provides a ligand contact to substrate. Substrate-binding residues include Asp-123, Ser-161, Lys-165, Lys-168, and His-196. Residues His-196 and His-198 each coordinate Mn(2+).

This sequence belongs to the LpxH family. Requires Mn(2+) as cofactor.

The protein localises to the cell inner membrane. It carries out the reaction UDP-2-N,3-O-bis[(3R)-3-hydroxytetradecanoyl]-alpha-D-glucosamine + H2O = 2-N,3-O-bis[(3R)-3-hydroxytetradecanoyl]-alpha-D-glucosaminyl 1-phosphate + UMP + 2 H(+). Its pathway is glycolipid biosynthesis; lipid IV(A) biosynthesis; lipid IV(A) from (3R)-3-hydroxytetradecanoyl-[acyl-carrier-protein] and UDP-N-acetyl-alpha-D-glucosamine: step 4/6. Its function is as follows. Hydrolyzes the pyrophosphate bond of UDP-2,3-diacylglucosamine to yield 2,3-diacylglucosamine 1-phosphate (lipid X) and UMP by catalyzing the attack of water at the alpha-P atom. Involved in the biosynthesis of lipid A, a phosphorylated glycolipid that anchors the lipopolysaccharide to the outer membrane of the cell. The chain is UDP-2,3-diacylglucosamine hydrolase from Histophilus somni (strain 129Pt) (Haemophilus somnus).